A 1201-amino-acid polypeptide reads, in one-letter code: DNA-directed RNA polymerase subunit beta' (1201 aa).

Zn(2+) is bound by residues cysteine 60, cysteine 62, cysteine 75, and cysteine 78. Mg(2+) is bound by residues aspartate 449, aspartate 451, and aspartate 453. 4 residues coordinate Zn(2+): cysteine 818, cysteine 892, cysteine 899, and cysteine 902.

The protein belongs to the RNA polymerase beta' chain family. As to quaternary structure, the RNAP catalytic core consists of 2 alpha, 1 beta, 1 beta' and 1 omega subunit. When a sigma factor is associated with the core the holoenzyme is formed, which can initiate transcription. Mg(2+) serves as cofactor. Zn(2+) is required as a cofactor.

The catalysed reaction is RNA(n) + a ribonucleoside 5'-triphosphate = RNA(n+1) + diphosphate. Its function is as follows. DNA-dependent RNA polymerase catalyzes the transcription of DNA into RNA using the four ribonucleoside triphosphates as substrates. The protein is DNA-directed RNA polymerase subunit beta' of Listeria monocytogenes serotype 4b (strain F2365).